We begin with the raw amino-acid sequence, 90 residues long: Small ribosomal subunit protein bS20 (90 aa).

Belongs to the bacterial ribosomal protein bS20 family.

Functionally, binds directly to 16S ribosomal RNA. The chain is Small ribosomal subunit protein bS20 from Roseiflexus sp. (strain RS-1).